We begin with the raw amino-acid sequence, 1459 residues long: Mediator of RNA polymerase II transcription subunit 14 (1459 aa).

A disordered region spans residues 1–37 (MAPVQLDNHQLIPPGGGGGSSGGGGSSSGSASAPAPP). The segment covering 14–27 (PGGGGGSSGGGGSS) has biased composition (gly residues). The short motif at 75 to 79 (LTDLL) is the LXXLL motif 1 element. An interaction with STAT2 region spans residues 194 to 572 (KQATLHQLNQ…VPNKPTQLSY (379 aa)). The interaction with SREBF1 stretch occupies residues 506–830 (LGQQRCKQSI…TKGSSISIQW (325 aa)). 2 positions are modified to phosphoserine: serine 623 and serine 992. Residues 979-1171 (ARRRSVNEDD…NMPPPRKLPQ (193 aa)) are disordered. Polar residues-rich tracts occupy residues 1029–1059 (PPTSYHSTVNQSPSMMHTQSPGNLHAASSPS) and 1097–1106 (DPSSPYTMVS). Phosphoserine is present on residues serine 1117, serine 1124, serine 1133, serine 1141, and serine 1149. The span at 1152 to 1161 (AGTSSQTMPT) shows a compositional bias: polar residues. Positions 1187 to 1191 (LNILL) match the LXXLL motif 2 motif.

This sequence belongs to the Mediator complex subunit 14 family. In terms of assembly, component of the Mediator complex, which is composed of MED1, MED4, MED6, MED7, MED8, MED9, MED10, MED11, MED12, MED13, MED13L, MED14, MED15, MED16, MED17, MED18, MED19, MED20, MED21, MED22, MED23, MED24, MED25, MED26, MED27, MED29, MED30, MED31, CCNC, CDK8 and CDC2L6/CDK11. The MED12, MED13, CCNC and CDK8 subunits form a distinct module termed the CDK8 module. Mediator containing the CDK8 module is less active than Mediator lacking this module in supporting transcriptional activation. Individual preparations of the Mediator complex lacking one or more distinct subunits have been variously termed ARC, CRSP, DRIP, PC2, SMCC and TRAP. Interacts with AR, ESR1, SREBF1 and STAT2. Interacts with GATA1.

It localises to the nucleus. Functionally, component of the Mediator complex, a coactivator involved in the regulated transcription of nearly all RNA polymerase II-dependent genes. Mediator functions as a bridge to convey information from gene-specific regulatory proteins to the basal RNA polymerase II transcription machinery. Mediator is recruited to promoters by direct interactions with regulatory proteins and serves as a scaffold for the assembly of a functional preinitiation complex with RNA polymerase II and the general transcription factors. In Mus musculus (Mouse), this protein is Mediator of RNA polymerase II transcription subunit 14 (Med14).